The sequence spans 154 residues: Large ribosomal subunit protein uL13 (154 aa).

This sequence belongs to the universal ribosomal protein uL13 family. As to quaternary structure, part of the 50S ribosomal subunit.

Its function is as follows. This protein is one of the early assembly proteins of the 50S ribosomal subunit, although it is not seen to bind rRNA by itself. It is important during the early stages of 50S assembly. This is Large ribosomal subunit protein uL13 from Cereibacter sphaeroides (strain ATCC 17025 / ATH 2.4.3) (Rhodobacter sphaeroides).